The following is a 358-amino-acid chain: Peptide chain release factor 1 (358 aa).

An N5-methylglutamine modification is found at Gln-233.

This sequence belongs to the prokaryotic/mitochondrial release factor family. In terms of processing, methylated by PrmC. Methylation increases the termination efficiency of RF1.

The protein localises to the cytoplasm. In terms of biological role, peptide chain release factor 1 directs the termination of translation in response to the peptide chain termination codons UAG and UAA. In Staphylococcus aureus (strain MSSA476), this protein is Peptide chain release factor 1.